The primary structure comprises 62 residues: Cytotoxin 7 (62 aa).

The signal sequence occupies residues tyrosine 1–threonine 2. Cystine bridges form between cysteine 5–cysteine 23, cysteine 16–cysteine 40, cysteine 44–cysteine 55, and cysteine 56–cysteine 61.

This sequence belongs to the three-finger toxin family. Short-chain subfamily. Type IA cytotoxin sub-subfamily. In terms of assembly, monomer in solution; Homodimer and oligomer in the presence of negatively charged lipids forming a pore with a size ranging between 20 and 30 Angstroms. As to expression, expressed by the venom gland.

The protein localises to the secreted. Its subcellular location is the target cell membrane. In terms of biological role, shows cytolytic activity on many different cells by forming pore in lipid membranes. In vivo, increases heart rate or kills the animal by cardiac arrest. In addition, it binds to heparin with high affinity, interacts with Kv channel-interacting protein 1 (KCNIP1) in a calcium-independent manner, and binds to integrin alpha-V/beta-3 (ITGAV/ITGB3) with moderate affinity. In Naja sputatrix (Malayan spitting cobra), this protein is Cytotoxin 7.